Consider the following 552-residue polypeptide: Probable protein kinase UbiB (552 aa).

A Protein kinase domain is found at 121–504; sequence HFDTVPLASA…QGLQRRVVNA (384 aa). ATP contacts are provided by residues 127–135 and Lys149; that span reads LASASISQV. Catalysis depends on Asp284, which acts as the Proton acceptor. 2 helical membrane-spanning segments follow: residues 501 to 521 and 526 to 546; these read VVNAIVGSGLLVAAAVLYGLH and YLGAIPVWSLISGCVGALALF.

It belongs to the ABC1 family. UbiB subfamily.

The protein resides in the cell inner membrane. Its pathway is cofactor biosynthesis; ubiquinone biosynthesis [regulation]. Functionally, is probably a protein kinase regulator of UbiI activity which is involved in aerobic coenzyme Q (ubiquinone) biosynthesis. In Xylella fastidiosa (strain 9a5c), this protein is Probable protein kinase UbiB.